Here is a 418-residue protein sequence, read N- to C-terminus: Enolase 1 (418 aa).

(2R)-2-phosphoglycerate is bound at residue glutamine 162. Residue glutamate 204 is the Proton donor of the active site. Positions 241, 285, and 312 each coordinate Mg(2+). Lysine 337, arginine 366, serine 367, and lysine 388 together coordinate (2R)-2-phosphoglycerate. Catalysis depends on lysine 337, which acts as the Proton acceptor.

This sequence belongs to the enolase family. The cofactor is Mg(2+).

It is found in the cytoplasm. The protein localises to the secreted. It localises to the cell surface. It catalyses the reaction (2R)-2-phosphoglycerate = phosphoenolpyruvate + H2O. The protein operates within carbohydrate degradation; glycolysis; pyruvate from D-glyceraldehyde 3-phosphate: step 4/5. Functionally, catalyzes the reversible conversion of 2-phosphoglycerate (2-PG) into phosphoenolpyruvate (PEP). It is essential for the degradation of carbohydrates via glycolysis. The polypeptide is Enolase 1 (Lactococcus lactis subsp. cremoris (strain SK11)).